We begin with the raw amino-acid sequence, 346 residues long: Acetyl-coenzyme A carboxylase carboxyl transferase subunit beta (346 aa).

The CoA carboxyltransferase N-terminal domain occupies 24-292 (LWIKCPKSGD…LPEVEPIAVA (269 aa)). The span at 300-311 (AEAEAAPDEVVE) shows a compositional bias: acidic residues. A disordered region spans residues 300–346 (AEAEAAPDEVVEVEAPAVDEIVEEKPAATKAKPRSKAKSKAAPKTDE). Over residues 330–340 (AKPRSKAKSKA) the composition is skewed to basic residues.

The protein belongs to the AccD/PCCB family. As to quaternary structure, acetyl-CoA carboxylase is a heterohexamer composed of biotin carboxyl carrier protein (AccB), biotin carboxylase (AccC) and two subunits each of ACCase subunit alpha (AccA) and ACCase subunit beta (AccD).

The protein resides in the cytoplasm. The catalysed reaction is N(6)-carboxybiotinyl-L-lysyl-[protein] + acetyl-CoA = N(6)-biotinyl-L-lysyl-[protein] + malonyl-CoA. Its pathway is lipid metabolism; malonyl-CoA biosynthesis; malonyl-CoA from acetyl-CoA: step 1/1. Functionally, component of the acetyl coenzyme A carboxylase (ACC) complex. Biotin carboxylase (BC) catalyzes the carboxylation of biotin on its carrier protein (BCCP) and then the CO(2) group is transferred by the transcarboxylase to acetyl-CoA to form malonyl-CoA. In Hirschia baltica (strain ATCC 49814 / DSM 5838 / IFAM 1418), this protein is Acetyl-coenzyme A carboxylase carboxyl transferase subunit beta.